A 321-amino-acid polypeptide reads, in one-letter code: Glucokinase (321 aa).

8 to 13 (GDVGGT) contributes to the ATP binding site.

Belongs to the bacterial glucokinase family.

The protein resides in the cytoplasm. It catalyses the reaction D-glucose + ATP = D-glucose 6-phosphate + ADP + H(+). In Escherichia coli (strain SMS-3-5 / SECEC), this protein is Glucokinase.